We begin with the raw amino-acid sequence, 319 residues long: Large ribosomal subunit protein uL10 (319 aa).

The disordered stretch occupies residues 289–319; it reads EQKSAAPAAKEEAPKEDSEESDEDMGFGLFD.

It belongs to the universal ribosomal protein uL10 family. P0 forms a pentameric complex by interaction with dimers of P1 and P2. Post-translationally, phosphorylated.

The protein localises to the nucleus. It is found in the cytoplasm. Its function is as follows. Ribosomal protein P0 is the functional equivalent of E.coli protein L10. The protein is Large ribosomal subunit protein uL10 (rplp0) of Danio rerio (Zebrafish).